The following is a 393-amino-acid chain: Acetate kinase (393 aa).

Asn-7 is a binding site for Mg(2+). An ATP-binding site is contributed by Lys-14. Position 87 (Arg-87) interacts with substrate. Catalysis depends on Asp-144, which acts as the Proton donor/acceptor. Residues 202-206 (HIGNG), 277-279 (DLR), and 326-330 (GVGEN) contribute to the ATP site. Residue Glu-380 participates in Mg(2+) binding.

Belongs to the acetokinase family. As to quaternary structure, homodimer. Requires Mg(2+) as cofactor. The cofactor is Mn(2+).

The protein resides in the cytoplasm. It carries out the reaction acetate + ATP = acetyl phosphate + ADP. Its pathway is metabolic intermediate biosynthesis; acetyl-CoA biosynthesis; acetyl-CoA from acetate: step 1/2. Catalyzes the formation of acetyl phosphate from acetate and ATP. Can also catalyze the reverse reaction. In Mycoplasmopsis pulmonis (strain UAB CTIP) (Mycoplasma pulmonis), this protein is Acetate kinase.